We begin with the raw amino-acid sequence, 93 residues long: Pyrimidine/purine nucleoside phosphorylase (93 aa).

It belongs to the nucleoside phosphorylase PpnP family.

It catalyses the reaction a purine D-ribonucleoside + phosphate = a purine nucleobase + alpha-D-ribose 1-phosphate. The enzyme catalyses adenosine + phosphate = alpha-D-ribose 1-phosphate + adenine. The catalysed reaction is cytidine + phosphate = cytosine + alpha-D-ribose 1-phosphate. It carries out the reaction guanosine + phosphate = alpha-D-ribose 1-phosphate + guanine. It catalyses the reaction inosine + phosphate = alpha-D-ribose 1-phosphate + hypoxanthine. The enzyme catalyses thymidine + phosphate = 2-deoxy-alpha-D-ribose 1-phosphate + thymine. The catalysed reaction is uridine + phosphate = alpha-D-ribose 1-phosphate + uracil. It carries out the reaction xanthosine + phosphate = alpha-D-ribose 1-phosphate + xanthine. Functionally, catalyzes the phosphorolysis of diverse nucleosides, yielding D-ribose 1-phosphate and the respective free bases. Can use uridine, adenosine, guanosine, cytidine, thymidine, inosine and xanthosine as substrates. Also catalyzes the reverse reactions. The sequence is that of Pyrimidine/purine nucleoside phosphorylase from Shewanella pealeana (strain ATCC 700345 / ANG-SQ1).